The primary structure comprises 271 residues: N-acetyltransferase ECO1 (271 aa).

Residues 26-50 (VKCPKCSITYSTNSPSDLVQHKRYH) form a CCHH-type zinc finger. The region spanning 109–271 (VMISPKKANE…SGKLLIPCYI (163 aa)) is the N-acetyltransferase domain.

Belongs to the acetyltransferase family. ECO subfamily.

Its subcellular location is the nucleus. Probable acetyltransferase required for the establishment of sister chromatid cohesion and couple the processes of cohesion and DNA replication to ensure that only sister chromatids become paired together. In contrast to the structural cohesins, the deposition and establishment factors are required only during S phase. Acts by acetylating the cohesin complex component SMC3. The protein is N-acetyltransferase ECO1 (ECO1) of Kluyveromyces lactis (strain ATCC 8585 / CBS 2359 / DSM 70799 / NBRC 1267 / NRRL Y-1140 / WM37) (Yeast).